A 1531-amino-acid polypeptide reads, in one-letter code: La-related protein Larp4B (1531 aa).

A compositionally biased stretch (low complexity) spans 112-147 (HTHVAHQQQQQQQQQTIQQHLHQQQQQQSPHPAQHL). Disordered stretches follow at residues 112–148 (HTHV…QHLT) and 239–263 (QLPA…EPNI). Residues 262 to 351 (NIPLDKLKQM…RPNRKRCIII (90 aa)) enclose the HTH La-type RNA-binding domain. The 76-residue stretch at 348 to 423 (CIIILREISN…KPIMARIKPK (76 aa)) folds into the RRM domain. 6 disordered regions span residues 533 to 605 (PLPP…QGGN), 710 to 736 (AHSH…ASSS), 748 to 768 (TAPA…QQTQ), 791 to 1135 (QEAG…SNQQ), 1160 to 1211 (DVVR…TPAL), and 1251 to 1285 (ASSK…QPSQ). Positions 565–578 (YNNNHRGNPNNVGG) are enriched in low complexity. 2 stretches are compositionally biased toward low complexity: residues 754–768 (QPGQ…QQTQ) and 810–826 (SSNM…TSMS). Positions 860–884 (SSPSNPHPQQHLMSSSTGSNVQSAG) are enriched in polar residues. Residues 945 to 959 (ALSSQQQQHHLTTGT) are compositionally biased toward low complexity. Over residues 966–975 (HHYHHHHHHN) the composition is skewed to basic residues. The span at 983–1004 (NSGGLGVSSGGSGGGGSGGGSG) shows a compositional bias: gly residues. Residues 1031-1045 (HQQQQQQQQQQQQQQ) are compositionally biased toward low complexity. Positions 1068–1086 (TSATAPHTPQATGGASLHN) are enriched in polar residues. Residues 1087–1115 (STTSSSSSTGLGQKQTLHQQQQQAPQQHQ) are compositionally biased toward low complexity. At serine 1123 the chain carries Phosphoserine. A compositionally biased stretch (gly residues) spans 1164 to 1173 (TGGGGGGGGK). The segment covering 1183–1200 (PQGQNQPHMAPNYQQHQP) has biased composition (polar residues). A compositionally biased stretch (basic and acidic residues) spans 1270-1280 (KSNKTEDEMHP). Phosphoserine is present on residues serine 1370 and serine 1413. 2 disordered regions span residues 1393 to 1418 (KAAA…TGSH) and 1450 to 1531 (GGAS…ANNS). 2 stretches are compositionally biased toward polar residues: residues 1467–1477 (ATNTTQGSSAV) and 1502–1515 (QHYG…TNAN).

Its function is as follows. Probable RNA binding protein. Negatively regulates myc at the protein level, via an unknown mechanism, and may therefore have a role in growth. Has no effect on myc mRNA levels. The polypeptide is La-related protein Larp4B (Drosophila melanogaster (Fruit fly)).